The primary structure comprises 439 residues: tRNA modification GTPase MnmE (439 aa).

Positions 20, 78, and 116 each coordinate (6S)-5-formyl-5,6,7,8-tetrahydrofolate. One can recognise a TrmE-type G domain in the interval 211 to 364 (GIYVTILGEP…LLNLIKQKVE (154 aa)). GTP contacts are provided by residues 221 to 226 (NSGKST), 240 to 246 (SEYAGTT), and 265 to 268 (DTAG). Mg(2+) contacts are provided by S225 and T246. K439 contributes to the (6S)-5-formyl-5,6,7,8-tetrahydrofolate binding site.

The protein belongs to the TRAFAC class TrmE-Era-EngA-EngB-Septin-like GTPase superfamily. TrmE GTPase family. As to quaternary structure, homodimer. Heterotetramer of two MnmE and two MnmG subunits. The cofactor is K(+).

Its subcellular location is the cytoplasm. Its function is as follows. Exhibits a very high intrinsic GTPase hydrolysis rate. Involved in the addition of a carboxymethylaminomethyl (cmnm) group at the wobble position (U34) of certain tRNAs, forming tRNA-cmnm(5)s(2)U34. The protein is tRNA modification GTPase MnmE of Ehrlichia chaffeensis (strain ATCC CRL-10679 / Arkansas).